Here is a 380-residue protein sequence, read N- to C-terminus: Cytochrome b (380 aa).

4 helical membrane-spanning segments follow: residues 34–54 (FGSL…LLAM), 78–99 (WLIR…FLHI), 114–134 (WNTG…GYVL), and 179–199 (FFAL…VHLT). Heme b-binding residues include H84 and H98. Residues H183 and H197 each coordinate heme b. H202 contacts a ubiquinone. 4 helical membrane-spanning segments follow: residues 227 to 247 (LKDI…ALFS), 289 to 309 (LGGV…PFLH), 321 to 341 (LSQT…WIGS), and 348 to 368 (FMII…ILFP).

It belongs to the cytochrome b family. The cytochrome bc1 complex contains 11 subunits: 3 respiratory subunits (MT-CYB, CYC1 and UQCRFS1), 2 core proteins (UQCRC1 and UQCRC2) and 6 low-molecular weight proteins (UQCRH/QCR6, UQCRB/QCR7, UQCRQ/QCR8, UQCR10/QCR9, UQCR11/QCR10 and a cleavage product of UQCRFS1). This cytochrome bc1 complex then forms a dimer. Heme b is required as a cofactor.

Its subcellular location is the mitochondrion inner membrane. Its function is as follows. Component of the ubiquinol-cytochrome c reductase complex (complex III or cytochrome b-c1 complex) that is part of the mitochondrial respiratory chain. The b-c1 complex mediates electron transfer from ubiquinol to cytochrome c. Contributes to the generation of a proton gradient across the mitochondrial membrane that is then used for ATP synthesis. This is Cytochrome b (MT-CYB) from Gallus lafayettii (Sri Lanka junglefowl).